Consider the following 145-residue polypeptide: Protein SPMIP3 (145 aa).

In Mus musculus (Mouse), this protein is Protein SPMIP3.